The chain runs to 1104 residues: Receptor-mediated endocytosis protein 6 (1104 aa).

A Ras-GAP domain is found at 156–389; sequence LKIAQVVCYL…EMMDSLLVEN (234 aa). A disordered region spans residues 663-682; sequence SSLAKQPSGMVSSASAQNIP. One can recognise a VPS9 domain in the interval 966-1104; sequence QKKDKLLQSV…SAVEYIKTIL (139 aa).

Belongs to the GAPVD1 family. In terms of assembly, interacts with GDP-bound rab-5. Interacts with alpha-adaptin.

The protein resides in the membrane. It is found in the cytoplasmic vesicle. The protein localises to the clathrin-coated vesicle. In terms of biological role, acts both as a GTPase-activating protein (GAP) and a guanine nucleotide exchange factor (GEF), and participates in endocytosis. Acts by regulating the activation of rab-5 by exchanging bound GDP for free GTP at clathrin coated pits. The chain is Receptor-mediated endocytosis protein 6 (rme-6) from Caenorhabditis briggsae.